The chain runs to 80 residues: Cytochrome c oxidase subunit 7A1, mitochondrial (80 aa).

The N-terminal 21 residues, 1–21, are a transit peptide targeting the mitochondrion; it reads MRALRVSQALVRSFSSTARNR. Over 22–46 the chain is Mitochondrial matrix; sequence FENRVAEKQKLFQEDNGLPVHLKGG. The chain crosses the membrane as a helical span at residues 47-75; the sequence is ATDNILYRVTMTLCLGGTLYSLYCLGWAS. Residues 76–80 are Mitochondrial intermembrane-facing; that stretch reads FPHKK.

Belongs to the cytochrome c oxidase VIIa family. As to quaternary structure, component of the complex IV (CIV, cytochrome c oxidase), a multisubunit enzyme composed of 14 subunits. The complex is composed of a catalytic core of 3 subunits MT-CO1, MT-CO2 and MT-CO3, encoded in the mitochondrial DNA, and 11 supernumerary subunits COX4I1 (or COX4I2), COX5A, COX5B, COX6A2 (or COX6A1), COX6B1 (or COX6B2), COX6C, COX7A1 (or COX7A2), COX7B, COX7C, COX8B and NDUFA4, which are encoded in the nuclear genome. The complex exists as a monomer or a dimer and forms supercomplexes (SCs) in the inner mitochondrial membrane with NADH-ubiquinone oxidoreductase (complex I, CI) and ubiquinol-cytochrome c oxidoreductase (cytochrome b-c1 complex, complex III, CIII), resulting in different assemblies (supercomplex SCI(1)III(2)IV(1) and megacomplex MCI(2)III(2)IV(2)).

The protein localises to the mitochondrion inner membrane. It functions in the pathway energy metabolism; oxidative phosphorylation. Functionally, component of the mitochondrial respiratory complex IV (CIV, also named cytochrome c oxidase complex), the last enzyme in the mitochondrial electron transport chain which drives oxidative phosphorylation. The CIV complex is the component of the respiratory chain that catalyzes the reduction of oxygen to water. Acts as an assembly factor that specifically drives the homodimerization of CIV complexes, mediating the formation of mitochondrial respiratory supercomplexes (respirasomes) containing two CIV: supercomplxes with two molecules of CIV show improved activity. Despite being highly expressed in brown adipose tissue, not required for thermogenesis. The polypeptide is Cytochrome c oxidase subunit 7A1, mitochondrial (COX7A1) (Bos taurus (Bovine)).